Reading from the N-terminus, the 130-residue chain is Small ribosomal subunit protein uS8x (130 aa).

This sequence belongs to the universal ribosomal protein uS8 family.

This chain is Small ribosomal subunit protein uS8x (RPS15AD), found in Arabidopsis thaliana (Mouse-ear cress).